A 415-amino-acid chain; its full sequence is 26S proteasome regulatory subunit 6B (415 aa).

203–210 (GPPGCGKT) contributes to the ATP binding site.

It belongs to the AAA ATPase family.

It localises to the cytoplasm. The protein localises to the nucleus. The 26S proteasome is involved in the ATP-dependent degradation of ubiquitinated proteins. The regulatory (or ATPase) complex confers ATP dependency and substrate specificity to the 26S complex. In Manduca sexta (Tobacco hawkmoth), this protein is 26S proteasome regulatory subunit 6B.